A 48-amino-acid chain; its full sequence is LGEKGYSYSTGDSSVTVQHDTLPYSRYQGLYNYAHPGYNTYPYNQYQG.

In Limulus polyphemus (Atlantic horseshoe crab), this protein is Cuticle protein 10.